Here is a 141-residue protein sequence, read N- to C-terminus: Eukaryotic translation initiation factor 1A (141 aa).

The segment covering 1 to 15 (MPKNKGKGGKNRRRG) has biased composition (basic residues). The disordered stretch occupies residues 1–28 (MPKNKGKGGKNRRRGKNENEQKRELQFK). Residues 16–28 (KNENEQKRELQFK) show a composition bias toward basic and acidic residues. Residues 21–95 (QKRELQFKEE…DKADVILRYN (75 aa)) enclose the S1-like domain.

This sequence belongs to the eIF-1A family.

Its function is as follows. Seems to be required for maximal rate of protein biosynthesis. Enhances ribosome dissociation into subunits and stabilizes the binding of the initiator Met-tRNA(I) to 40 S ribosomal subunits. The polypeptide is Eukaryotic translation initiation factor 1A (eif1a) (Dictyostelium discoideum (Social amoeba)).